The chain runs to 193 residues: Peptidyl-tRNA hydrolase (193 aa).

Position 17 (Tyr-17) interacts with tRNA. Catalysis depends on His-22, which acts as the Proton acceptor. 3 residues coordinate tRNA: Tyr-68, Asn-70, and Asn-116.

Belongs to the PTH family. In terms of assembly, monomer.

It localises to the cytoplasm. The catalysed reaction is an N-acyl-L-alpha-aminoacyl-tRNA + H2O = an N-acyl-L-amino acid + a tRNA + H(+). Hydrolyzes ribosome-free peptidyl-tRNAs (with 1 or more amino acids incorporated), which drop off the ribosome during protein synthesis, or as a result of ribosome stalling. Its function is as follows. Catalyzes the release of premature peptidyl moieties from peptidyl-tRNA molecules trapped in stalled 50S ribosomal subunits, and thus maintains levels of free tRNAs and 50S ribosomes. In Acinetobacter baumannii (strain AB0057), this protein is Peptidyl-tRNA hydrolase.